The following is a 155-amino-acid chain: Protein SprT-like (155 aa).

The SprT-like domain maps to 7 to 145 (QRHMEEVSLQ…GSCGGKLIQT (139 aa)). His67 contacts Zn(2+). Glu68 is an active-site residue. His71 contributes to the Zn(2+) binding site.

The protein belongs to the SprT family. The cofactor is Zn(2+).

The protein resides in the cytoplasm. In Listeria monocytogenes serotype 4b (strain CLIP80459), this protein is Protein SprT-like.